Consider the following 437-residue polypeptide: Dihydrofolate synthase/folylpolyglutamate synthase (437 aa).

28–30 (DLG) contacts 7,8-dihydropteroate. An ATP-binding site is contributed by 58–61 (GKGT). Serine 82 serves as a coordination point for Mg(2+). Position 120–123 (120–123 (TYFE)) interacts with 7,8-dihydropteroate. Position 144 (glutamate 144) interacts with Mg(2+). 151–153 (LDA) serves as a coordination point for 7,8-dihydropteroate. Histidine 171 lines the Mg(2+) pocket. ATP is bound by residues asparagine 255, arginine 287, and aspartate 316.

It belongs to the folylpolyglutamate synthase family. Monomer. Mg(2+) is required as a cofactor.

The enzyme catalyses 7,8-dihydropteroate + L-glutamate + ATP = 7,8-dihydrofolate + ADP + phosphate + H(+). It catalyses the reaction (6S)-5,6,7,8-tetrahydrofolyl-(gamma-L-Glu)(n) + L-glutamate + ATP = (6S)-5,6,7,8-tetrahydrofolyl-(gamma-L-Glu)(n+1) + ADP + phosphate + H(+). The catalysed reaction is 10-formyltetrahydrofolyl-(gamma-L-Glu)(n) + L-glutamate + ATP = 10-formyltetrahydrofolyl-(gamma-L-Glu)(n+1) + ADP + phosphate + H(+). It carries out the reaction (6R)-5,10-methylenetetrahydrofolyl-(gamma-L-Glu)(n) + L-glutamate + ATP = (6R)-5,10-methylenetetrahydrofolyl-(gamma-L-Glu)(n+1) + ADP + phosphate + H(+). It participates in cofactor biosynthesis; tetrahydrofolate biosynthesis; 7,8-dihydrofolate from 2-amino-4-hydroxy-6-hydroxymethyl-7,8-dihydropteridine diphosphate and 4-aminobenzoate: step 2/2. Its pathway is cofactor biosynthesis; tetrahydrofolylpolyglutamate biosynthesis. Functions in two distinct reactions of the de novo folate biosynthetic pathway. Catalyzes the addition of a glutamate residue to dihydropteroate (7,8-dihydropteroate or H2Pte) to form dihydrofolate (7,8-dihydrofolate monoglutamate or H2Pte-Glu). Also catalyzes successive additions of L-glutamate to tetrahydrofolate or 10-formyltetrahydrofolate or 5,10-methylenetetrahydrofolate, leading to folylpolyglutamate derivatives. This is Dihydrofolate synthase/folylpolyglutamate synthase (folC) from Haemophilus influenzae (strain ATCC 51907 / DSM 11121 / KW20 / Rd).